Consider the following 422-residue polypeptide: Phosphoribosylamine--glycine ligase (422 aa).

An ATP-grasp domain is found at 107–312 (KEVMAAAGVR…LGQLLYAAGT (206 aa)). 138-193 (PPVGDLSWVVKDDRLAAGKGVVVTSDRDVARTHAAGLLEAGHPVLLESYLDGPEVS) provides a ligand contact to ATP. Mg(2+) contacts are provided by Glu282 and Asn284.

The protein belongs to the GARS family. The cofactor is Mg(2+). Mn(2+) is required as a cofactor.

The catalysed reaction is 5-phospho-beta-D-ribosylamine + glycine + ATP = N(1)-(5-phospho-beta-D-ribosyl)glycinamide + ADP + phosphate + H(+). It functions in the pathway purine metabolism; IMP biosynthesis via de novo pathway; N(1)-(5-phospho-D-ribosyl)glycinamide from 5-phospho-alpha-D-ribose 1-diphosphate: step 2/2. This chain is Phosphoribosylamine--glycine ligase, found in Mycobacterium leprae (strain TN).